The following is a 199-amino-acid chain: Recombination protein RecR (199 aa).

Residues 58–73 (CLVCGNVTGSDICPIC) form a C4-type zinc finger. Positions 81 to 176 (GEICVVTDVA…AVTGLAQGVP (96 aa)) constitute a Toprim domain.

Belongs to the RecR family.

Its function is as follows. May play a role in DNA repair. It seems to be involved in an RecBC-independent recombinational process of DNA repair. It may act with RecF and RecO. This chain is Recombination protein RecR, found in Paracoccus denitrificans (strain Pd 1222).